Consider the following 580-residue polypeptide: F-box only protein 24 (580 aa).

Positions 36 to 82 (PISIQLFPPELVEHIISFLPVRDLVALGQTCRYFHEVCDGEGVWRRI) constitute an F-box domain. One copy of the RCC1 repeat lies at 376 to 425 (GRIFMQGNNRYGQLGTGDKMDRGEPTQVCYLQRPITLWCGLNHSLVLSQS).

Directly interacts with SKP1 and CUL1.

Functionally, substrate-recognition component of the SCF (SKP1-CUL1-F-box protein)-type E3 ubiquitin ligase complex. This chain is F-box only protein 24 (FBXO24), found in Homo sapiens (Human).